The following is a 247-amino-acid chain: uncharacterized protein (247 aa).

The N-acetyltransferase domain occupies 102 to 247 (RSIMSRTNDN…ISEHHYRIKR (146 aa)).

It belongs to the acetyltransferase family.

This is an uncharacterized protein from Bacillus subtilis (strain 168).